The primary structure comprises 320 residues: Cytochrome f (320 aa).

The signal sequence occupies residues 1-35; that stretch reads MQTRNTFSWIREEITRSISVSLMIYIITWASISGA. Heme-binding residues include Tyr36, Cys56, Cys59, and His60. Residues 286–306 form a helical membrane-spanning segment; that stretch reads VQGLLFFLGSVVLAQIFLVLK.

The protein belongs to the cytochrome f family. In terms of assembly, the 4 large subunits of the cytochrome b6-f complex are cytochrome b6, subunit IV (17 kDa polypeptide, petD), cytochrome f and the Rieske protein, while the 4 small subunits are PetG, PetL, PetM and PetN. The complex functions as a dimer. Requires heme as cofactor.

The protein localises to the plastid. It localises to the chloroplast thylakoid membrane. Functionally, component of the cytochrome b6-f complex, which mediates electron transfer between photosystem II (PSII) and photosystem I (PSI), cyclic electron flow around PSI, and state transitions. This Capsella bursa-pastoris (Shepherd's purse) protein is Cytochrome f.